Reading from the N-terminus, the 356-residue chain is Protein RecA (356 aa).

Residue 68–75 (GQESSGKT) participates in ATP binding.

It belongs to the RecA family.

It is found in the cytoplasm. In terms of biological role, can catalyze the hydrolysis of ATP in the presence of single-stranded DNA, the ATP-dependent uptake of single-stranded DNA by duplex DNA, and the ATP-dependent hybridization of homologous single-stranded DNAs. It interacts with LexA causing its activation and leading to its autocatalytic cleavage. The protein is Protein RecA of Thermotoga sp. (strain RQ2).